The following is a 60-amino-acid chain: Large ribosomal subunit protein bL32 (60 aa).

A disordered region spans residues 1–60 (MAVQQNKKSRSARDMRRSHDALEPNALSVEKSTGEVHLRHHVSPDGFYRGRKVIDKGADE). The segment covering 11–22 (SARDMRRSHDAL) has biased composition (basic and acidic residues).

This sequence belongs to the bacterial ribosomal protein bL32 family.

The protein is Large ribosomal subunit protein bL32 of Stutzerimonas stutzeri (strain A1501) (Pseudomonas stutzeri).